The chain runs to 616 residues: Chaperone protein HscA homolog (616 aa).

This sequence belongs to the heat shock protein 70 family.

In terms of biological role, chaperone involved in the maturation of iron-sulfur cluster-containing proteins. Has a low intrinsic ATPase activity which is markedly stimulated by HscB. The chain is Chaperone protein HscA homolog from Mannheimia succiniciproducens (strain KCTC 0769BP / MBEL55E).